Here is a 156-residue protein sequence, read N- to C-terminus: Peptide deformylase (156 aa).

Fe cation-binding residues include C90 and H132. E133 is an active-site residue. H136 provides a ligand contact to Fe cation.

Belongs to the polypeptide deformylase family. Requires Fe(2+) as cofactor.

It carries out the reaction N-terminal N-formyl-L-methionyl-[peptide] + H2O = N-terminal L-methionyl-[peptide] + formate. Functionally, removes the formyl group from the N-terminal Met of newly synthesized proteins. Requires at least a dipeptide for an efficient rate of reaction. N-terminal L-methionine is a prerequisite for activity but the enzyme has broad specificity at other positions. This Natranaerobius thermophilus (strain ATCC BAA-1301 / DSM 18059 / JW/NM-WN-LF) protein is Peptide deformylase.